We begin with the raw amino-acid sequence, 207 residues long: LexA repressor (207 aa).

A DNA-binding region (H-T-H motif) is located at residues 28–48; that stretch reads RAEIARHLGFKSANAAEEHLK. Residues Ser-124 and Lys-161 each act as for autocatalytic cleavage activity in the active site.

It belongs to the peptidase S24 family. As to quaternary structure, homodimer.

The enzyme catalyses Hydrolysis of Ala-|-Gly bond in repressor LexA.. In terms of biological role, represses a number of genes involved in the response to DNA damage (SOS response), including recA and lexA. In the presence of single-stranded DNA, RecA interacts with LexA causing an autocatalytic cleavage which disrupts the DNA-binding part of LexA, leading to derepression of the SOS regulon and eventually DNA repair. This Pseudoalteromonas atlantica (strain T6c / ATCC BAA-1087) protein is LexA repressor.